We begin with the raw amino-acid sequence, 488 residues long: Histone deacetylase 2 (488 aa).

The histone deacetylase stretch occupies residues 9–322; the sequence is KKKVCYYYDG…WTYETAVALD (314 aa). 1D-myo-inositol 1,4,5,6-tetrakisphosphate-binding residues include glycine 28 and lysine 32. Lysine 75 is subject to N6-acetyllysine; alternate. Lysine 75 is covalently cross-linked (Glycyl lysine isopeptide (Lys-Gly) (interchain with G-Cter in SUMO2); alternate). The active site involves histidine 142. Ca(2+) contacts are provided by aspartate 175, aspartate 177, histidine 179, phenylalanine 188, threonine 191, valine 194, serine 198, and phenylalanine 199. Positions 177 and 179 each coordinate Zn(2+). Lysine 221 is modified (N6-acetyllysine). Tyrosine 223 serves as a coordination point for Ca(2+). Cysteine 262 is modified (S-nitrosocysteine). Aspartate 265 serves as a coordination point for Zn(2+). Residue arginine 271 coordinates 1D-myo-inositol 1,4,5,6-tetrakisphosphate. An S-nitrosocysteine modification is found at cysteine 274. The disordered stretch occupies residues 389–488; the sequence is AVHEDSGDED…GTKSEQLSNP (100 aa). A phosphoserine mark is found at serine 394, serine 407, serine 422, and serine 424. Positions 402–417 are enriched in basic and acidic residues; sequence PDKRISIRASDKRIAC. Acidic residues predominate over residues 418-428; sequence DEEFSDSEDEG. Residues 429–481 show a composition bias toward basic and acidic residues; it reads EGGRRNVADHKKGAKKARIEEDKKETEDKKTDVKEEDKSKDNSGEKTDTKGTK. Glycyl lysine isopeptide (Lys-Gly) (interchain with G-Cter in SUMO2) cross-links involve residues lysine 439, lysine 452, lysine 458, lysine 462, lysine 478, and lysine 481.

The protein belongs to the histone deacetylase family. HD type 1 subfamily. Part of the core histone deacetylase (HDAC) complex composed of HDAC1, HDAC2, RBBP4 and RBBP7, the core complex associates with SIN3, SAP18 and SAP30 to form the SIN3 HDAC complex. Component of the nucleosome remodeling and deacetylase (NuRD) repressor complex, composed of core proteins MTA1, MTA2, MTA3, RBBP4, RBBP7, HDAC1, HDAC2, MBD2, MBD3, and peripherally associated proteins CDK2AP1, CDK2AP2, GATAD2A, GATAD2B, CHD3, CHD4 and CHD5. The exact stoichiometry of the NuRD complex is unknown, and some subunits such as MBD2 and MBD3, GATAD2A and GATAD2B, and CHD3, CHD4 and CHD5 define mutually exclusive NuRD complexes. Component of a RCOR/GFI/KDM1A/HDAC complex. Component of a BHC histone deacetylase complex that contains HDAC1, HDAC2, HMG20B, KDM1A, RCOR1 and PHF21A. The BHC complex may also contain ZMYM2, ZNF217, ZMYM3, GSE1 and GTF2I. Part of a complex containing the core histones H2A, H2B, H3 and H4, DEK and unphosphorylated DAXX. Part of a complex containing ATR and CHD4. Forms a heterologous complex at least with YY1. Interacts in the late S-phase of DNA-replication with DNMT1 in the other transcriptional repressor complex composed of DNMT1, DMAP1, PCNA, CAF1. Component of a mSin3A corepressor complex that contains SIN3A, SAP130, SUDS3, ARID4B, HDAC1 and HDAC2. Part of a complex composed of TRIM28, HDAC1, HDAC2 and EHMT2. Part of a complex containing at least CDYL, MIER1, MIER2, HDAC1 and HDAC2. Component of a histone deacetylase complex containing DNTTIP1, ZNF541, HDAC1 and HDAC2. Forms a complex comprising APPL1, RUVBL2, APPL2, CTNNB1 and HDAC1. Interacts directly with GFI1. Interacts directly with GFI1B. Interacts with APEX1; the interaction is not dependent on the acetylated status of APEX1. Interacts with ATR. Interacts with BCL6 (non-acetylated form). Interacts with BEND3. Interacts with CBFA2T3. Interacts with CDK2AP1. Interacts with CHD4. Interacts with CHD5. Interacts with CHFR. Interacts with CRY1. Interacts with DNMT1. Interacts with GATAD2A. Interacts with HCFC1. Interacts with HDAC7. Interacts with HDAC10. Interacts with INSM1. Interacts with KDM4A. Interacts with MACROH2A1 (via the non-histone region). Interacts with MBD3L2. Interacts with MTA1, with a preference for sumoylated MTA1. Interacts with NACC2. Interacts with NRIP1. Interacts with PELP1. Interacts with PIMREG. Interacts with PRDM6. Interacts with PWWP2B. Interacts with SAP30. Interacts with SAP30L. Interacts with SETDB1. Interacts with SIX3. Interacts with SMARCAD1. Interacts with SNW1. Interacts with SPHK2. Interacts with SPEN/MINT. Interacts (CK2 phosphorylated form) with SP3. Interacts with SUV39H1. Interacts with TSHZ3 (via its N-terminus). Interacts with ZMYND8. Interacts with ZNF431. Interacts with ZNF263; recruited to the SIX3 promoter along with other proteins involved in chromatin modification and transcriptional corepression where it contributes to transcriptional repression. Identified in a complex with HDAC1, KCTD19, DNTTIP1 and ZNF541. Component of the SIN3B complex, which includes SIN3B, HDAC2, PHF12 and MORF4L1; interacts directly with all subunits. Zn(2+) is required as a cofactor. It depends on Ca(2+) as a cofactor. In terms of processing, S-nitrosylated by GAPDH. In neurons, S-nitrosylation at Cys-262 and Cys-274 does not affect enzyme activity, but induces HDAC2 release from chromatin. This in turn increases acetylation of histones surrounding neurotrophin-dependent gene promoters and promotes their transcription. In embryonic cortical neurons, S-Nitrosylation regulates dendritic growth and branching. Widely expressed; lower levels in brain and lung.

The protein localises to the nucleus. The protein resides in the cytoplasm. It catalyses the reaction N(6)-acetyl-L-lysyl-[histone] + H2O = L-lysyl-[histone] + acetate. It carries out the reaction N(6)-acetyl-L-lysyl-[protein] + H2O = L-lysyl-[protein] + acetate. The enzyme catalyses N(6)-(2E)-butenoyl-L-lysyl-[protein] + H2O = (2E)-2-butenoate + L-lysyl-[protein]. The catalysed reaction is N(6)-(2-hydroxyisobutanoyl)-L-lysyl-[protein] + H2O = 2-hydroxy-2-methylpropanoate + L-lysyl-[protein]. It catalyses the reaction N(6)-[(S)-lactoyl]-L-lysyl-[protein] + H2O = (S)-lactate + L-lysyl-[protein]. With respect to regulation, inositol tetraphosphate (1D-myo-inositol 1,4,5,6-tetrakisphosphate) may act as an intermolecular glue between HDAC2 and N-Cor repressor complex components. Histone deacetylase that catalyzes the deacetylation of lysine residues on the N-terminal part of the core histones (H2A, H2B, H3 and H4). Histone deacetylation gives a tag for epigenetic repression and plays an important role in transcriptional regulation, cell cycle progression and developmental events. Histone deacetylases act via the formation of large multiprotein complexes. Forms transcriptional repressor complexes by associating with MAD, SIN3, YY1 and N-COR. Component of a RCOR/GFI/KDM1A/HDAC complex that suppresses, via histone deacetylase (HDAC) recruitment, a number of genes implicated in multilineage blood cell development. Acts as a component of the histone deacetylase NuRD complex which participates in the remodeling of chromatin. Component of the SIN3B complex that represses transcription and counteracts the histone acetyltransferase activity of EP300 through the recognition H3K27ac marks by PHF12 and the activity of the histone deacetylase HDAC2. Also deacetylates non-histone targets: deacetylates TSHZ3, thereby regulating its transcriptional repressor activity. May be involved in the transcriptional repression of circadian target genes, such as PER1, mediated by CRY1 through histone deacetylation. Involved in MTA1-mediated transcriptional corepression of TFF1 and CDKN1A. In addition to protein deacetylase activity, also acts as a protein-lysine deacylase by recognizing other acyl groups: catalyzes removal of (2E)-butenoyl (crotonyl), lactoyl (lactyl) and 2-hydroxyisobutanoyl (2-hydroxyisobutyryl) acyl groups from lysine residues, leading to protein decrotonylation, delactylation and de-2-hydroxyisobutyrylation, respectively. This is Histone deacetylase 2 from Homo sapiens (Human).